The chain runs to 829 residues: Probable methyltransferase PMT26 (829 aa).

At methionine 1 to asparagine 17 the chain is on the cytoplasmic side. The helical; Signal-anchor for type II membrane protein transmembrane segment at tyrosine 18–methionine 38 threads the bilayer. Topologically, residues threonine 39–glycine 829 are lumenal. A disordered region spans residues aspartate 55–alanine 258. Composition is skewed to basic and acidic residues over residues asparagine 85–serine 143, leucine 151–asparagine 160, threonine 168–threonine 177, and glutamate 187–threonine 231. N-linked (GlcNAc...) asparagine glycosylation is found at asparagine 215, asparagine 247, asparagine 264, and asparagine 270. Polar residues predominate over residues glutamine 241–aspartate 252. The disordered stretch occupies residues glycine 271–glycine 291. The segment covering serine 280 to glycine 291 has biased composition (basic and acidic residues). N-linked (GlcNAc...) asparagine glycosylation is found at asparagine 302, asparagine 579, asparagine 595, and asparagine 756.

This sequence belongs to the methyltransferase superfamily.

It localises to the golgi apparatus membrane. This Arabidopsis thaliana (Mouse-ear cress) protein is Probable methyltransferase PMT26.